Consider the following 264-residue polypeptide: uncharacterized protein (264 aa).

The signal sequence occupies residues 1–22; it reads MKSIKRIGLCISLLILIIFVTS. Cys23 carries the N-palmitoyl cysteine lipid modification. Cys23 is lipidated: S-diacylglycerol cysteine.

The protein belongs to the staphylococcal tandem lipoprotein family.

It is found in the cell membrane. This is an uncharacterized protein from Staphylococcus aureus (strain MRSA252).